We begin with the raw amino-acid sequence, 235 residues long: 5'-methylthioadenosine/S-adenosylhomocysteine nucleosidase (235 aa).

The Proton acceptor role is filled by Glu-12. Residues Gly-78, Met-153, and 174–175 (ME) each bind substrate. Residue Asp-198 is the Proton donor of the active site.

Belongs to the PNP/UDP phosphorylase family. MtnN subfamily.

It catalyses the reaction S-adenosyl-L-homocysteine + H2O = S-(5-deoxy-D-ribos-5-yl)-L-homocysteine + adenine. It carries out the reaction S-methyl-5'-thioadenosine + H2O = 5-(methylsulfanyl)-D-ribose + adenine. The enzyme catalyses 5'-deoxyadenosine + H2O = 5-deoxy-D-ribose + adenine. The protein operates within amino-acid biosynthesis; L-methionine biosynthesis via salvage pathway; S-methyl-5-thio-alpha-D-ribose 1-phosphate from S-methyl-5'-thioadenosine (hydrolase route): step 1/2. Catalyzes the irreversible cleavage of the glycosidic bond in both 5'-methylthioadenosine (MTA) and S-adenosylhomocysteine (SAH/AdoHcy) to adenine and the corresponding thioribose, 5'-methylthioribose and S-ribosylhomocysteine, respectively. Also cleaves 5'-deoxyadenosine, a toxic by-product of radical S-adenosylmethionine (SAM) enzymes, into 5-deoxyribose and adenine. The sequence is that of 5'-methylthioadenosine/S-adenosylhomocysteine nucleosidase from Geobacillus kaustophilus (strain HTA426).